Here is a 392-residue protein sequence, read N- to C-terminus: Glycerophosphodiester phosphodiesterase GDPD5 (392 aa).

Positions 1–21 (MILTRCLPLIWLSLLTVCAAG) are cleaved as a signal peptide. The GP-PDE domain maps to 44–362 (PYNIAHRGSN…DFTGSLHNFQ (319 aa)). N-linked (GlcNAc...) asparagine glycosylation is found at asparagine 120, asparagine 239, asparagine 260, and asparagine 329.

It belongs to the glycerophosphoryl diester phosphodiesterase family. As to expression, expressed in roots, rosette and cauline leaves, stems, flowers and siliques.

It localises to the secreted. The protein resides in the cell wall. Its subcellular location is the vacuole. It catalyses the reaction a sn-glycero-3-phosphodiester + H2O = an alcohol + sn-glycerol 3-phosphate + H(+). The protein is Glycerophosphodiester phosphodiesterase GDPD5 of Arabidopsis thaliana (Mouse-ear cress).